Here is a 443-residue protein sequence, read N- to C-terminus: GTPase Der (443 aa).

2 EngA-type G domains span residues 3 to 167 (PTLV…PEPE) and 176 to 349 (VRVA…AAAM). Residues 9-16 (GRPNVGKS), 56-60 (DTGGF), 119-122 (NKAE), 182-189 (GRPNVGKS), 229-233 (DTAGM), and 294-297 (NKWD) contribute to the GTP site. A KH-like domain is found at 350–434 (AKMTTPRLTR…PLRIQFVTAK (85 aa)).

This sequence belongs to the TRAFAC class TrmE-Era-EngA-EngB-Septin-like GTPase superfamily. EngA (Der) GTPase family. As to quaternary structure, associates with the 50S ribosomal subunit.

Its function is as follows. GTPase that plays an essential role in the late steps of ribosome biogenesis. The chain is GTPase Der from Dechloromonas aromatica (strain RCB).